A 744-amino-acid polypeptide reads, in one-letter code: FHF complex subunit HOOK-interacting protein 2B (744 aa).

2 disordered regions span residues 184-213 (KTAR…LNRD) and 510-530 (LDSG…SSDG). Over residues 197–213 (AGYRDKDCPHSDALNRD) the composition is skewed to basic and acidic residues.

Belongs to the FHIP family. In terms of tissue distribution, expressed in colon.

Functionally, able to activate MAPK/ERK and TGFB signaling pathways. May regulate the activity of genes involved in intestinal barrier function and immunoprotective inflammation. May play a role in cell proliferation. This chain is FHF complex subunit HOOK-interacting protein 2B, found in Mus musculus (Mouse).